The following is a 478-amino-acid chain: SPbeta prophage-derived uncharacterized protein YonD (478 aa).

Positions 326–419 (IQSQLNQKDE…KFSTEEVQNL (94 aa)) form a coiled coil.

The sequence is that of SPbeta prophage-derived uncharacterized protein YonD (yonD) from Bacillus subtilis (strain 168).